We begin with the raw amino-acid sequence, 163 residues long: Nucleotide-binding protein BBR47_25280 (163 aa).

The protein belongs to the YajQ family.

In terms of biological role, nucleotide-binding protein. The chain is Nucleotide-binding protein BBR47_25280 from Brevibacillus brevis (strain 47 / JCM 6285 / NBRC 100599).